Consider the following 152-residue polypeptide: Heavy metal-associated isoprenylated plant protein 22 (152 aa).

The HMA domain maps to 28–91 (MQTVNIKVKI…TVQSTGKKKA (64 aa)). The a metal cation site is built by cysteine 39 and cysteine 42. The segment at 123-152 (SEQAQAQPGSTDDKLMSLFSDENPNACTVM) is disordered. Polar residues predominate over residues 142 to 152 (SDENPNACTVM). Cysteine 149 carries the post-translational modification Cysteine methyl ester. Residue cysteine 149 is the site of S-farnesyl cysteine attachment. The propeptide at 150-152 (TVM) is removed in mature form.

It belongs to the HIPP family. As to quaternary structure, interacts with ZHD11/HB29. As to expression, expressed in lateral roots and mature anthers.

It localises to the membrane. Its function is as follows. Heavy-metal-binding protein. Binds cadmium. May be involved in cadmium transport and play a role in cadmium detoxification. The chain is Heavy metal-associated isoprenylated plant protein 22 from Arabidopsis thaliana (Mouse-ear cress).